Reading from the N-terminus, the 622-residue chain is Lamin Dm0 (622 aa).

The disordered stretch occupies residues 1–50 (MSSKSRRAGTATPQPGNTSTPRPPSAGPQPPPPSTHSQTASSPLSPTRHS). An N-acetylserine modification is found at S2. Residues 2-56 (SSKSRRAGTATPQPGNTSTPRPPSAGPQPPPPSTHSQTASSPLSPTRHSRVAEKV) are head. Phosphothreonine occurs at positions 10, 12, and 20. Over residues 21-34 (PRPPSAGPQPPPPS) the composition is skewed to pro residues. 2 positions are modified to phosphoserine: S25 and S34. T39 carries the phosphothreonine modification. 3 positions are modified to phosphoserine: S41, S42, and S45. Phosphothreonine is present on T47. One can recognise an IF rod domain in the interval 54-410 (EKVELQNLND…KLLVGEEARL (357 aa)). Residues 55 to 91 (KVELQNLNDRLATYIDRVRNLETENSRLTIEVQTTRD) are coil 1A. Residues 92–103 (TVTRETTNIKNI) are linker 1. The interval 104-241 (FEAELLETRR…QIHSQEINES (138 aa)) is coil 1B. S235 carries the phosphoserine modification. The tract at residues 242 to 265 (RRIKQTEYSEIDGRLSSEYDAKLK) is linker 2. Y249 is subject to Phosphotyrosine. S250 and S311 each carry phosphoserine. Residues 266–408 (QSLQELRAQY…YDKLLVGEEA (143 aa)) are coil 2. A tail region spans residues 409–619 (RLNITPATNT…GDPQQSNEKC (211 aa)). Phosphothreonine is present on residues T413 and T435. Over residues 429–440 (RNSTRATPSRRT) the composition is skewed to polar residues. A disordered region spans residues 429-448 (RNSTRATPSRRTPSAAVKRK). S442 bears the Phosphoserine mark. The Nuclear localization signal signature appears at 446-451 (KRKRAV). S455 and S459 each carry phosphoserine. The 128-residue stretch at 461 to 588 (ADYYVSASAK…RIVSQHTSSS (128 aa)) folds into the LTD domain. S595 is modified (phosphoserine). At T597 the chain carries Phosphothreonine. Residues 603–622 (EQLYHQQGDPQQSNEKCAIM) are disordered. Residues 605-622 (LYHQQGDPQQSNEKCAIM) are compositionally biased toward polar residues. S615 is modified (phosphoserine). A Cysteine methyl ester modification is found at C619. C619 carries the S-farnesyl cysteine lipid modification. Residues 620-622 (AIM) constitute a propeptide, removed in mature form.

The protein belongs to the intermediate filament family. Interacts directly with LBR. Interacts with MAN1. Interacts with Ote. Post-translationally, three forms of lamin have been identified in D.melanogaster, lamin Dm0 is rapidly processed to lamin Dm1 in the cytoplasm, Dm1 is then assembled in the nuclear envelope and is then phosphorylated, forming lamin Dm2. As to expression, constitutively expressed in all tissues (at protein level). Expressed in spermatocytes (at protein level).

Its subcellular location is the nucleus. The protein resides in the nucleus inner membrane. It localises to the nucleus envelope. The protein localises to the nucleus lamina. It is found in the cytoplasm. Its subcellular location is the cytoskeleton. The protein resides in the spindle pole. In terms of biological role, lamins are components of the nuclear lamina, a fibrous layer on the nucleoplasmic side of the inner nuclear membrane, which is thought to provide a framework for the nuclear envelope and may also interact with chromatin. May have a role in the localization of the LEM domain proteins Ote, bocks and MAN1 to the nuclear membrane. In spermatocytes, plays a role in maintaining type-A lamin LamC nuclear localization; regulates meiotic cytokinesis by maintaining the structure of the spindle envelope, and by contributing to the formation of the contractile ring and central spindle. Required for nuclear migration and to link the microtubule organizing center (MTOC) to the nucleus. In addition, is required for nuclear envelope localization of klar. The chain is Lamin Dm0 from Drosophila melanogaster (Fruit fly).